Consider the following 613-residue polypeptide: Dihydroxy-acid dehydratase (613 aa).

D81 provides a ligand contact to Mg(2+). A [2Fe-2S] cluster-binding site is contributed by C122. Mg(2+)-binding residues include D123 and K124. An N6-carboxylysine modification is found at K124. Position 193 (C193) interacts with [2Fe-2S] cluster. E489 is a Mg(2+) binding site. The Proton acceptor role is filled by S515.

The protein belongs to the IlvD/Edd family. In terms of assembly, homodimer. [2Fe-2S] cluster is required as a cofactor. The cofactor is Mg(2+).

It carries out the reaction (2R)-2,3-dihydroxy-3-methylbutanoate = 3-methyl-2-oxobutanoate + H2O. The enzyme catalyses (2R,3R)-2,3-dihydroxy-3-methylpentanoate = (S)-3-methyl-2-oxopentanoate + H2O. Its pathway is amino-acid biosynthesis; L-isoleucine biosynthesis; L-isoleucine from 2-oxobutanoate: step 3/4. The protein operates within amino-acid biosynthesis; L-valine biosynthesis; L-valine from pyruvate: step 3/4. Functions in the biosynthesis of branched-chain amino acids. Catalyzes the dehydration of (2R,3R)-2,3-dihydroxy-3-methylpentanoate (2,3-dihydroxy-3-methylvalerate) into 2-oxo-3-methylpentanoate (2-oxo-3-methylvalerate) and of (2R)-2,3-dihydroxy-3-methylbutanoate (2,3-dihydroxyisovalerate) into 2-oxo-3-methylbutanoate (2-oxoisovalerate), the penultimate precursor to L-isoleucine and L-valine, respectively. The protein is Dihydroxy-acid dehydratase of Pseudomonas fluorescens (strain SBW25).